A 475-amino-acid polypeptide reads, in one-letter code: Mucin-1 (475 aa).

The signal sequence occupies residues 1-23 (MTPGTQSLFFLLLLLTVLTVVTG). Positions 23–252 (GSGHASSTPG…SPLTSSNHST (230 aa)) are disordered. Residues 24 to 380 (SGHASSTPGG…QSGAGVPGWG (357 aa)) lie on the Extracellular side of the membrane. Over residues 38-48 (SATQRSSMPSS) the composition is skewed to polar residues. The segment covering 54 to 75 (VSMTSSVLSSHSPGSGSSTTQG) has biased composition (low complexity). Repeat copies occupy residues 86 to 105 (PASG…PVTR), 106 to 125 (PAPG…PDTR), 126 to 145 (PALG…PDTR), 146 to 165 (PTLG…PDTR), and 166 to 185 (PTLG…SGSA). The interval 86–185 (PASGSAATWG…HNVTSASGSA (100 aa)) is 5 X 20 AA approximate tandem repeats. Polar residues predominate over residues 90–102 (SAATWGQDVTSVP). O-linked (GalNAc...) threonine glycosylation is found at Thr93 and Thr99. Ser100 carries O-linked (GalNAc...) serine glycosylation. Thr104 carries O-linked (GalNAc...) threonine glycosylation. Positions 109–122 (GSTTSPAQDVTSAP) are enriched in polar residues. Asn177 is a glycosylation site (N-linked (GlcNAc...) asparagine). Residues 180–190 (SASGSASGSAS) are compositionally biased toward low complexity. Composition is skewed to polar residues over residues 191 to 213 (TLVH…TPFS) and 233 to 252 (DASS…NHST). Asn195, Asn249, Asn275, and Asn353 each carry an N-linked (GlcNAc...) asparagine glycan. Positions 259–368 (GVSFFFLSFH…VSVSDVPFPF (110 aa)) constitute an SEA domain. The chain crosses the membrane as a helical span at residues 381–401 (IALLVLVCVLVALAIVYLIAL). The Cytoplasmic portion of the chain corresponds to 402 to 475 (AVCQCRRKNY…PAVAATSANL (74 aa)). S-palmitoyl cysteine attachment occurs at residues Cys404 and Cys406. The interaction with P53 stretch occupies residues 412-448 (GQLDIFPARDAYHPMSEYPTYHTHGRYVPPSSTNRSP). Tyr423 bears the Phosphotyrosine; by PDGFR mark. The short motif at 423 to 426 (YHPM) is the Interaction with GRB2 element. At Tyr432 the chain carries Phosphotyrosine. A disordered region spans residues 435 to 460 (HGRYVPPSSTNRSPYEKVSEGNGGSS). A Phosphotyrosine; by PDGFR modification is found at Tyr438. The tract at residues 443-450 (STNRSPYE) is required for interaction with GSK3B. Position 444 is a phosphothreonine; by PKC/PRKCD (Thr444). Ser447 is modified (phosphoserine; by GSK3-beta). Tyr449 carries the post-translational modification Phosphotyrosine; by CSK, EGFR and SRC. The Interaction with SRC and ESR1 signature appears at 449 to 452 (YEKV). A required for interaction with beta- and gamma-catenins region spans residues 453–461 (SEGNGGSSL). Tyr463 is subject to Phosphotyrosine. The short motif at 463–466 (YTNP) is the Required for interaction with AP1S2 element.

As to quaternary structure, the alpha subunit forms a tight, non-covalent heterodimeric complex with the proteolytically-released beta-subunit. Binds directly the SH2 domain of GRB2, and forms a MUC1/GRB2/SOS1 complex involved in RAS signaling. The cytoplasmic tail (MUC1CT) interacts with several proteins such as SRC, CTNNB1 and ERBs. Interaction with the SH2 domain of CSK decreases interaction with GSK3B. Interacts with CTNNB1/beta-catenin and JUP/gamma-catenin and promotes cell adhesion. Interaction with JUP/gamma-catenin is induced by heregulin. Binds PRKCD, ERBB2, ERBB3 and ERBB4. Heregulin (HRG) stimulates the interaction with ERBB2 and, to a much lesser extent, the interaction with ERBB3 and ERBB4. Interacts with P53 in response to DNA damage. Interacts with KLF4. Interacts with estrogen receptor alpha/ESR1, through its DNA-binding domain, and stimulates its transcription activity. Binds ADAM17. Post-translationally, probably both N- and O-glycosylated (in repeat region). In terms of processing, proteolytic cleavage in the SEA domain occurs in the endoplasmic reticulum by an autoproteolytic mechanism and requires the full-length SEA domain as well as requiring a Ser, Thr or Cys residue at the P + 1 site. Ectodomain shedding is mediated by ADAM17 in uterine epithelial cells. Dual palmitoylation on cysteine residues in the CQC motif is required for recycling from endosomes back to the plasma membrane. Post-translationally, phosphorylated on tyrosines and serine residues in the C-terminal. Phosphorylation on tyrosines in the C-terminal increases the nuclear location of MUC1 and beta-catenin. Phosphorylation by PKC delta induces binding of MUC1 to beta-catenin/CTNNB1 and thus decreases the formation of the beta-catenin/E-cadherin complex. Src-mediated phosphorylation inhibits interaction with GSK3B. Csk- or Src- or EGFR-mediated phosphorylation on Tyr-449 increases binding to beta-catenin/CTNNB1. GSK3B-mediated phosphorylation on Ser-447 decreases this interaction but restores the formation of the beta-cadherin/E-cadherin complex. On T-cell receptor activation, phosphorylated by LCK. PDGFR-mediated phosphorylation increases nuclear colocalization of MUC1CT and CTNNB1.

It localises to the apical cell membrane. The protein resides in the cell membrane. The protein localises to the cytoplasm. Its subcellular location is the nucleus. The alpha subunit has cell adhesive properties. Can act both as an adhesion and an anti-adhesion protein. May provide a protective layer on epithelial cells against bacterial and enzyme attack. Its function is as follows. The beta subunit contains a C-terminal domain which is involved in cell signaling, through phosphorylations and protein-protein interactions. Modulates signaling in ERK, Src and NF-kappaB pathways. In activated T-cells, influences directly or indirectly the Ras/MAPK pathway. Promotes tumor progression. Regulates P53-mediated transcription and determines cell fate in the genotoxic stress response. Binds, together with KLF4, the PE21 promoter element of P53 and represses P53 activity. In Hylobates lar (Lar gibbon), this protein is Mucin-1 (MUC1).